The following is a 316-amino-acid chain: Transcription initiation factor IIB (316 aa).

The TFIIB-type zinc finger occupies 7-38 (FRLRCPVCGSTDIVFNEETGEYVCARCGTIVL). Residues C11, C14, C30, and C33 each contribute to the Zn(2+) site. The interval 51-73 (FTPEERERRGRTGAPLSPTLHDH) is disordered. 2 repeat units span residues 124–207 (NELD…TKEL) and 218–299 (DHIP…EIMK).

It belongs to the TFIIB family.

Stabilizes TBP binding to an archaeal box-A promoter. Also responsible for recruiting RNA polymerase II to the pre-initiation complex (DNA-TBP-TFIIB). The chain is Transcription initiation factor IIB from Ignicoccus hospitalis (strain KIN4/I / DSM 18386 / JCM 14125).